The following is a 1327-amino-acid chain: P-glycoprotein 14 (1327 aa).

Positions 1–17 are enriched in basic and acidic residues; it reads MAPKDDPDNRGFDDQRR. Residues 1-23 form a disordered region; the sequence is MAPKDDPDNRGFDDQRRPSQRST. Residues 1-104 lie on the Cytoplasmic side of the membrane; sequence MAPKDDPDNR…RYGKKFDYLL (104 aa). Residues 105–125 traverse the membrane as a helical segment; that stretch reads LFIGTICAIISGVSQPILALV. The region spanning 106–394 is the ABC transmembrane type-1 1 domain; it reads FIGTICAIIS…ISPHMMVLLN (289 aa). Over 126-151 the chain is Extracellular; sequence SGRVTNALLVYPPTSKQFRNKANENV. The helical transmembrane segment at 152-172 threads the bilayer; sequence YIFLGIGIFISITNFIQYMCF. Topologically, residues 173 to 225 are cytoplasmic; the sequence is QHCCTRVMAQMRHRFVYSVLRQNAGWFDKNHSGTITTKLNDSMERIREGIGDK. A helical transmembrane segment spans residues 226–246; that stretch reads LGVLLRGFAMLIAAIVVAYIY. Residue Glu-247 is a topological domain, extracellular. The helical transmembrane segment at 248–268 threads the bilayer; it reads WRLASMMLGVAPTCCICMSLL. Topologically, residues 269-331 are cytoplasmic; the sequence is ARQMTSTTIK…KFAVWKGFWS (63 aa). Residues 332-352 traverse the membrane as a helical segment; that stretch reads GFFGGLFFFWLFSFLGCGMLY. Over 353 to 364 the chain is Extracellular; it reads GAYLLKVGIITT. Residues 365–385 form a helical membrane-spanning segment; sequence PGDVFIVVMSMLLGAYFLGLI. Residues 386-766 are Cytoplasmic-facing; sequence SPHMMVLLNA…NAKGNYLYMF (381 aa). The region spanning 429 to 665 is the ABC transporter 1 domain; that stretch reads VKFENVHFRY…GGRYFDLVKA (237 aa). 464-471 contributes to the ATP binding site; sequence GHSGCGKS. A disordered region spans residues 671–721; that stretch reads DPEATEEFEEEEIDLDDTSRSSRRSSMTSARSGSEAFRRGNSLNDSFSGSK. Positions 673 to 686 are enriched in acidic residues; sequence EATEEFEEEEIDLD. Over residues 694-704 the composition is skewed to low complexity; sequence RSSMTSARSGS. Residues 711 to 721 are compositionally biased toward polar residues; that stretch reads NSLNDSFSGSK. The region spanning 766–1053 is the ABC transmembrane type-1 2 domain; sequence FLGTVFALIR…SAQYFPEFVK (288 aa). A helical membrane pass occupies residues 767–789; that stretch reads LGTVFALIRGLELPALALIFGWV. Over 790 to 805 the chain is Extracellular; that stretch reads FEGFTFVPYGGRMMHR. Residues 806–826 form a helical membrane-spanning segment; it reads MAMAVIAFASVGVGVWFSQLA. Residues 827–886 are Cytoplasmic-facing; it reads SSVLFAVVSENLSMRFRVQSFRNLLYQDASYFDNPAHAPGKLITRLASDAPNIKAVVDAR. A helical transmembrane segment spans residues 887–907; sequence MLQVIYALAAIIANIAIAFIY. The Extracellular portion of the chain corresponds to 908–910; the sequence is CWQ. Residues 911–931 traverse the membrane as a helical segment; that stretch reads IGILGTSLILLLAFVMIGLAY. Topologically, residues 932 to 996 are cytoplasmic; it reads KISLMNVEQI…KGMIEAINYS (65 aa). The chain crosses the membrane as a helical span at residues 997-1017; it reads LTQSFMYFMMCFTYAVGIRII. Topologically, residues 1018-1030 are extracellular; sequence YQGDKSSDDTFKG. Residues 1031 to 1051 traverse the membrane as a helical segment; sequence IIAMMLGAVAVMNSAQYFPEF. The Cytoplasmic segment spans residues 1052 to 1327; that stretch reads VKAKTAAGML…KLIKKQDLAV (276 aa). The ABC transporter 2 domain maps to 1086–1322; that stretch reads ILFENVKFSY…KGRYYKLIKK (237 aa). 1121–1128 contributes to the ATP binding site; that stretch reads GPSGSGKS.

It belongs to the ABC transporter superfamily. ABCB family. Multidrug resistance exporter (TC 3.A.1.201) subfamily. In terms of tissue distribution, expressed in pharyngeal epithelial cells that surround the anterior pharyngeal cuticle. Shares same expression pattern as sms-5.

The protein localises to the apical cell membrane. Its function is as follows. Contributes to the establishment of a polar lipid barrier to block small molecule passage into the pharyngeal cuticle. Probably exports polar lipids into the developing pharyngeal cuticle to protect against xenobiotic insult. Likely functions in the same pathway as sphingomyelin synthase sms-5. In Caenorhabditis elegans, this protein is P-glycoprotein 14.